A 34-amino-acid chain; its full sequence is Protamine (34 aa).

The disordered stretch occupies residues 1-34 (PRRRRQASRPVRRRRRTRRSTAERRRRRVVRRRR).

Testis.

It is found in the nucleus. Its subcellular location is the chromosome. Its function is as follows. Protamines substitute for histones in the chromatin of sperm during the haploid phase of spermatogenesis. They compact sperm DNA into a highly condensed, stable and inactive complex. This is Protamine from Dicentrarchus labrax (European seabass).